Reading from the N-terminus, the 202-residue chain is Outer-membrane lipoprotein carrier protein (202 aa).

A signal peptide spans 1 to 21; that stretch reads MKRLLVACCFLSGLISASALA.

Belongs to the LolA family. As to quaternary structure, monomer.

The protein localises to the periplasm. Functionally, participates in the translocation of lipoproteins from the inner membrane to the outer membrane. Only forms a complex with a lipoprotein if the residue after the N-terminal Cys is not an aspartate (The Asp acts as a targeting signal to indicate that the lipoprotein should stay in the inner membrane). In Yersinia pestis bv. Antiqua (strain Antiqua), this protein is Outer-membrane lipoprotein carrier protein.